The sequence spans 539 residues: Chaperonin GroEL (539 aa).

ATP contacts are provided by residues 29–32 (TLGP), 86–90 (DGTTT), G413, 476–478 (NAA), and D492.

It belongs to the chaperonin (HSP60) family. Forms a cylinder of 14 subunits composed of two heptameric rings stacked back-to-back. Interacts with the co-chaperonin GroES.

It localises to the cytoplasm. It catalyses the reaction ATP + H2O + a folded polypeptide = ADP + phosphate + an unfolded polypeptide.. Together with its co-chaperonin GroES, plays an essential role in assisting protein folding. The GroEL-GroES system forms a nano-cage that allows encapsulation of the non-native substrate proteins and provides a physical environment optimized to promote and accelerate protein folding. This Parageobacillus thermoglucosidasius (Geobacillus thermoglucosidasius) protein is Chaperonin GroEL.